A 508-amino-acid chain; its full sequence is Light-independent protochlorophyllide reductase subunit B (508 aa).

Asp-36 lines the [4Fe-4S] cluster pocket. Asp-294 functions as the Proton donor in the catalytic mechanism. A substrate-binding site is contributed by 429-430 (GM).

It belongs to the ChlB/BchB/BchZ family. As to quaternary structure, protochlorophyllide reductase is composed of three subunits; ChlL, ChlN and ChlB. Forms a heterotetramer of two ChlB and two ChlN subunits. It depends on [4Fe-4S] cluster as a cofactor.

It catalyses the reaction chlorophyllide a + oxidized 2[4Fe-4S]-[ferredoxin] + 2 ADP + 2 phosphate = protochlorophyllide a + reduced 2[4Fe-4S]-[ferredoxin] + 2 ATP + 2 H2O. The protein operates within porphyrin-containing compound metabolism; chlorophyll biosynthesis (light-independent). In terms of biological role, component of the dark-operative protochlorophyllide reductase (DPOR) that uses Mg-ATP and reduced ferredoxin to reduce ring D of protochlorophyllide (Pchlide) to form chlorophyllide a (Chlide). This reaction is light-independent. The NB-protein (ChlN-ChlB) is the catalytic component of the complex. The protein is Light-independent protochlorophyllide reductase subunit B of Nostoc punctiforme (strain ATCC 29133 / PCC 73102).